The sequence spans 314 residues: Oxaloacetate tautomerase FAHD2B, mitochondrial (314 aa).

The N-terminal 84 residues, 1 to 84, are a transit peptide targeting the mitochondrion; sequence MLVSGRRRLL…ATLSVARRAL (84 aa). E159, E161, and D190 together coordinate Mg(2+).

This sequence belongs to the FAH family. The cofactor is Mg(2+). Requires Mn(2+) as cofactor.

The protein localises to the mitochondrion. The catalysed reaction is oxaloacetate = enol-oxaloacetate. Functionally, tautomerase that converts enol-oxaloacetate, a strong inhibitor of succinate dehydrogenase, to the physiological keto form of oxaloacetate. It is thereby required to maximize aerobic respiration efficiency by preventing succinate dehydrogenase inhibition. The protein is Oxaloacetate tautomerase FAHD2B, mitochondrial of Homo sapiens (Human).